The following is a 226-amino-acid chain: HTH-type transcriptional regulator TcmR (226 aa).

Residues 1-16 are compositionally biased toward polar residues; it reads MDSAETDTPSTRSTPN. Residues 1-25 are disordered; that stretch reads MDSAETDTPSTRSTPNGPGLRQRKL. In terms of domain architecture, HTH tetR-type spans 26–86; it reads RRTRDQLIRE…TPISAIDEAF (61 aa). Residues 49 to 68 constitute a DNA-binding region (H-T-H motif); that stretch reads TVEQIAEAVEVHPRTFFRHF.

The protein operates within antibiotic biosynthesis; tetracenomycin C biosynthesis. Represses transcription of the divergently oriented tcmR and tcmA (tetracenomycin C resistance and export) genes by binding to an intergenic operator region. This binding is inhibited by tetracenomycin C. This Streptomyces glaucescens protein is HTH-type transcriptional regulator TcmR (tcmR).